The chain runs to 91 residues: Elongation factor 1-beta (91 aa).

This sequence belongs to the EF-1-beta/EF-1-delta family.

Promotes the exchange of GDP for GTP in EF-1-alpha/GDP, thus allowing the regeneration of EF-1-alpha/GTP that could then be used to form the ternary complex EF-1-alpha/GTP/AAtRNA. The polypeptide is Elongation factor 1-beta (ef1b) (Pyrococcus abyssi (strain GE5 / Orsay)).